A 307-amino-acid chain; its full sequence is Elongation factor Ts (307 aa).

Residues 82–85 (TDFV) form an involved in Mg(2+) ion dislocation from EF-Tu region.

This sequence belongs to the EF-Ts family.

It is found in the cytoplasm. Associates with the EF-Tu.GDP complex and induces the exchange of GDP to GTP. It remains bound to the aminoacyl-tRNA.EF-Tu.GTP complex up to the GTP hydrolysis stage on the ribosome. In Nautilia profundicola (strain ATCC BAA-1463 / DSM 18972 / AmH), this protein is Elongation factor Ts.